Consider the following 335-residue polypeptide: Anthranilate phosphoribosyltransferase (335 aa).

Residues Gly-79, 82-83 (GD), Thr-87, 89-92 (NVST), 107-115 (KHGSRSVSS), and Ser-119 contribute to the 5-phospho-alpha-D-ribose 1-diphosphate site. Gly-79 contributes to the anthranilate binding site. A Mg(2+)-binding site is contributed by Ser-91. Residue Arg-165 participates in anthranilate binding. Mg(2+)-binding residues include Asp-223 and Glu-224.

It belongs to the anthranilate phosphoribosyltransferase family. In terms of assembly, homodimer. Requires Mg(2+) as cofactor.

The catalysed reaction is N-(5-phospho-beta-D-ribosyl)anthranilate + diphosphate = 5-phospho-alpha-D-ribose 1-diphosphate + anthranilate. It functions in the pathway amino-acid biosynthesis; L-tryptophan biosynthesis; L-tryptophan from chorismate: step 2/5. In terms of biological role, catalyzes the transfer of the phosphoribosyl group of 5-phosphorylribose-1-pyrophosphate (PRPP) to anthranilate to yield N-(5'-phosphoribosyl)-anthranilate (PRA). This Helicobacter pylori (strain HPAG1) protein is Anthranilate phosphoribosyltransferase.